The sequence spans 123 residues: Small ribosomal subunit protein uS12c (123 aa).

The protein belongs to the universal ribosomal protein uS12 family. Part of the 30S ribosomal subunit.

The protein localises to the plastid. It is found in the chloroplast. Its function is as follows. With S4 and S5 plays an important role in translational accuracy. Located at the interface of the 30S and 50S subunits. This is Small ribosomal subunit protein uS12c (rps12) from Marchantia polymorpha (Common liverwort).